We begin with the raw amino-acid sequence, 361 residues long: Myricetin 3-O-methyltransferase 3 (361 aa).

An S-adenosyl-L-methionine-binding site is contributed by Asp229. His267 (proton acceptor) is an active-site residue.

The protein belongs to the class I-like SAM-binding methyltransferase superfamily. Cation-independent O-methyltransferase family. As to quaternary structure, homodimer. Mainly expressed in leaves secreting glandular trichomes types 1 and 4 and, to a lesser extent, in storage trichomes type 6.

The enzyme catalyses kaempferol + S-adenosyl-L-methionine = 3-O-methylkaempferol + S-adenosyl-L-homocysteine + H(+). It catalyses the reaction quercetin + S-adenosyl-L-methionine = 3',4',5,7-tetrahydroxy-3-methoxyflavone + S-adenosyl-L-homocysteine + H(+). It carries out the reaction myricetin + S-adenosyl-L-methionine = 3-O-methylmyricetin + S-adenosyl-L-homocysteine + H(+). The catalysed reaction is kaempferide + S-adenosyl-L-methionine = 3,4'-O-dimethylkaempferol + S-adenosyl-L-homocysteine + H(+). The enzyme catalyses isorhamnetin + S-adenosyl-L-methionine = 3,3'-O-dimethylquercetin + S-adenosyl-L-homocysteine + H(+). It catalyses the reaction rhamnetin + S-adenosyl-L-methionine = 3',4',5-trihydroxy-3,7-dimethoxyflavone + S-adenosyl-L-homocysteine + H(+). It carries out the reaction laricitrin + S-adenosyl-L-methionine = 3,3'-O-dimethylmyricetin + S-adenosyl-L-homocysteine + H(+). The catalysed reaction is syringetin + S-adenosyl-L-methionine = 3,3',5'-O-trimethylmyricetin + S-adenosyl-L-homocysteine + H(+). It functions in the pathway flavonoid metabolism. Its function is as follows. Flavonoid 3-O-methyltransferase involved in the biosynthesis of polymethoxylated flavonoids natural products such as myricetin derivatives, aroma compounds possessing antioxidant properties and exhibiting pharmacological activities such as anti-carcinogen, anti-viral, anti-thrombotic, anti-diabetic, anti-atherosclerotic, and anti-inflammatory effects. Catalyzes S-adenosylmethionine-dependent regioselective 3-O-methylation of flavonoids; active on various hydroxylated flavonoid substrates. Active with myricetin, quercetin, kaempferol, 4'-methyl kaempferol (kaempferide), 3'-methyl quercetin (isorhamnetin), 7-methyl quercetin (rhamnetin), 3'-methyl myricetin (laricitrin) and 3',5'-dimethyl myricetin (syringetin), thus producing 3-methyl myricetin, 3-methyl quercetin, 3-methyl kaempferol, 4',3-methyl kaempferol, 3',3-methyl quercetin, 7,3-dimethyl quercetin, 3',3-dimethyl myricetin and 3',5',3-dimethyl myricetin, respectively. Inactive with flavonol substrates methylated at the 3-hydroxyl position such as 3-O-methyl quercetin. In Solanum habrochaites (Wild tomato), this protein is Myricetin 3-O-methyltransferase 3.